A 244-amino-acid chain; its full sequence is MRIIVVDNYEEMSKKAAAMIASQVILKPDSVLGLATGDTPIGMYKEIINIYKNEKMNFSKVKTFNLDEYYGLNRENPQSYYYYMMNNLFNHVNIDKNNINIPNGMADNIEVECKEYERKIDKAGGIDLQILGIGVNGHIGFNEPNISFESETHLVNLNEKTIESNSRFFSSKEEVPTKAISMGIKSIIHSKKIILLACGSAKSDAVSKAINGKINPNIPASILQLHRDVVVIIDKEAASKLKLK.

D67 (proton acceptor; for enolization step) is an active-site residue. The active-site For ring-opening step is N136. The active-site Proton acceptor; for ring-opening step is H138. The For ring-opening step role is filled by E143.

The protein belongs to the glucosamine/galactosamine-6-phosphate isomerase family. NagB subfamily.

The enzyme catalyses alpha-D-glucosamine 6-phosphate + H2O = beta-D-fructose 6-phosphate + NH4(+). It participates in amino-sugar metabolism; N-acetylneuraminate degradation; D-fructose 6-phosphate from N-acetylneuraminate: step 5/5. Functionally, catalyzes the reversible isomerization-deamination of glucosamine 6-phosphate (GlcN6P) to form fructose 6-phosphate (Fru6P) and ammonium ion. The sequence is that of Glucosamine-6-phosphate deaminase from Clostridium botulinum (strain Okra / Type B1).